A 218-amino-acid chain; its full sequence is DNA replication complex GINS protein psf3 (218 aa).

Residues 147–163 show a composition bias toward gly residues; that stretch reads GGGSSYHGRDGGGAGGK. The disordered stretch occupies residues 147-182; sequence GGGSSYHGRDGGGAGGKGKGKATKDDNASNLGVGGA.

Belongs to the GINS3/PSF3 family. As to quaternary structure, component of the GINS complex which is a heterotetramer of div-26/sld5, drc-1/psf1, drc-2/psf2 and drc-3/psf3.

It localises to the nucleus. Functionally, the GINS complex plays an essential role in the initiation of DNA replication. This chain is DNA replication complex GINS protein psf3 (drc-3), found in Neurospora crassa (strain ATCC 24698 / 74-OR23-1A / CBS 708.71 / DSM 1257 / FGSC 987).